The sequence spans 204 residues: MIEFIFKANKSITNGEINLKDLPGSSGRMDLVCRCVSSAFFLSHDLRRDTIFYSVHYGAPNPPVAIKFVGSELKRVSPDERSIALFIKKALDKSPMQLWKESTSGIYIAKKEFKDIILEKKNEGKEIYYLHKDGEDIENIFNKENNAENKNIVFILGDHIGIGEEDEKFLEDIGALKVSLSPLELHANHCITIVHNALDKAKLK.

S-adenosyl-L-methionine is bound by residues L130, G157, L180–L185, and C190.

It belongs to the methyltransferase superfamily. TrmY family. In terms of assembly, homodimer.

It is found in the cytoplasm. It catalyses the reaction pseudouridine(54) in tRNA + S-adenosyl-L-methionine = N(1)-methylpseudouridine(54) in tRNA + S-adenosyl-L-homocysteine + H(+). Functionally, specifically catalyzes the N1-methylation of pseudouridine at position 54 (Psi54) in tRNAs. This chain is tRNA (pseudouridine(54)-N(1))-methyltransferase, found in Methanococcus aeolicus (strain ATCC BAA-1280 / DSM 17508 / OCM 812 / Nankai-3).